A 606-amino-acid polypeptide reads, in one-letter code: Vitamin B12 transporter BtuB (606 aa).

A signal peptide spans Met1–Ala22. The short motif at Asp29 to Asn36 is the TonB box element. The TBDR plug domain occupies Pro41 to Thr153. The TBDR beta-barrel domain maps to Ser158–Phe606. The TonB C-terminal box motif lies at Leu589–Phe606.

This sequence belongs to the TonB-dependent receptor family. BtuB (TC 1.B.14.3.1) subfamily.

It is found in the cell outer membrane. Functionally, involved in the active translocation of vitamin B12 (cyanocobalamin) across the outer membrane to the periplasmic space. It derives its energy for transport by interacting with the trans-periplasmic membrane protein TonB. The sequence is that of Vitamin B12 transporter BtuB from Vibrio vulnificus (strain CMCP6).